A 743-amino-acid polypeptide reads, in one-letter code: Myb-related protein B (743 aa).

The disordered stretch occupies residues 1 to 29; that stretch reads MSRRSRGDDLEDLQYQDTDSDVPEPKENR. Residues 9–22 show a composition bias toward acidic residues; it reads DLEDLQYQDTDSDV. HTH myb-type domains lie at 26–77, 78–133, and 134–184; these read KENR…LRVL, HPDL…NPEV, and KKSS…KRKV. DNA-binding regions (H-T-H motif) lie at residues 54–77, 106–129, and 157–180; these read WKTIASNLNNRTEQQCQHRWLRVL, WTLIAKQLRGRMGKQCRERWHNHL, and WAEIAKLLPGRTDNAVKNHWNSTI. 2 disordered regions span residues 221 to 262 and 381 to 406; these read VERS…SESA and VTENGGSITTSVTEANSMTPKSTPVK.

As to quaternary structure, component of the DREAM complex.

Its subcellular location is the nucleus. In Xenopus laevis (African clawed frog), this protein is Myb-related protein B (mybl2).